Consider the following 229-residue polypeptide: UPF0173 metal-dependent hydrolase SAB1566c (229 aa).

It belongs to the UPF0173 family.

This is UPF0173 metal-dependent hydrolase SAB1566c from Staphylococcus aureus (strain bovine RF122 / ET3-1).